The primary structure comprises 334 residues: MQTKVNELLKPRHIEVTSVSDRQAKVVLEPLERGFGHTLGNALRRILLSSIPGAAVVEAEIEGVLHEYTSIEGVQEDVVDILLNLKGIALRMHNRDEATLTLKKKGPGVVTAGDITLDHDVEIVNPEHVIAHLTKNGELSMSLKLGRGRGYQPVTARRSSESEDRPIGRLMLDASFSPIRRVAYKVESARVEQRTDMDRLVIELETNGTVEADDAIRQAAGILQSQLAAFVELQGDESTVTESKQMEIDPILLRPVDDLELTVRSANCLKAENIYYIGDLIQRTEVELLKTPNLGKKSLTEIKDVLASHGLSMGMRLENWPPPGLKDQDKKASG.

An alpha N-terminal domain (alpha-NTD) region spans residues 1–234; it reads MQTKVNELLK…SQLAAFVELQ (234 aa). Positions 248 to 334 are alpha C-terminal domain (alpha-CTD); that stretch reads IDPILLRPVD…LKDQDKKASG (87 aa).

This sequence belongs to the RNA polymerase alpha chain family. As to quaternary structure, homodimer. The RNAP catalytic core consists of 2 alpha, 1 beta, 1 beta' and 1 omega subunit. When a sigma factor is associated with the core the holoenzyme is formed, which can initiate transcription.

It carries out the reaction RNA(n) + a ribonucleoside 5'-triphosphate = RNA(n+1) + diphosphate. Functionally, DNA-dependent RNA polymerase catalyzes the transcription of DNA into RNA using the four ribonucleoside triphosphates as substrates. The protein is DNA-directed RNA polymerase subunit alpha of Thioalkalivibrio sulfidiphilus (strain HL-EbGR7).